We begin with the raw amino-acid sequence, 712 residues long: Ribosome-releasing factor 2, mitochondrial (712 aa).

The N-terminal 28 residues, 1 to 28 (MQYSLLSAQLRCSRFLLRQQAPFINRCY), are a transit peptide targeting the mitochondrion. Residues 30–309 (DDIRNIGILA…AVNAYLPTPN (280 aa)) enclose the tr-type G domain. GTP contacts are provided by residues 39 to 46 (AHIDAGKT), 103 to 107 (DTPGH), and 157 to 160 (NKMD).

The protein belongs to the TRAFAC class translation factor GTPase superfamily. Classic translation factor GTPase family. EF-G/EF-2 subfamily.

It localises to the mitochondrion. In terms of biological role, mitochondrial GTPase that mediates the disassembly of ribosomes from messenger RNA at the termination of mitochondrial protein biosynthesis. Not involved in the GTP-dependent ribosomal translocation step during translation elongation. In Drosophila virilis (Fruit fly), this protein is Ribosome-releasing factor 2, mitochondrial.